The sequence spans 727 residues: Protein TITANIA (727 aa).

Residues 1-136 (MFGDSDGSKD…LASLLQPVPA (136 aa)) are disordered. Residues 14-25 (GAPPSTTDPPFP) show a composition bias toward pro residues. A compositionally biased stretch (basic and acidic residues) spans 67-88 (DDGKHCVERDFLHLSAPKRGDP). The span at 104–117 (DSLQLSLSLNSDGP) shows a compositional bias: low complexity. Residues 406–470 (ACTCSVCHKF…QFQCLACNHS (65 aa)) form a PHD-type zinc finger. Residues 629-697 (VKCKEAEAKL…LEELKMLENS (69 aa)) adopt a coiled-coil conformation.

Widely expressed.

Its subcellular location is the nucleus. Its function is as follows. Probable transcription factor that functions as a regulator of metal transporter genes responsible for essential metals delivery to shoots and normal plant growth. Required for the maintenance of metal transporter gene expression, such as IRT1, IRT2, ZIP1, ZIP9, NRAMP1 and NRAMP5. The polypeptide is Protein TITANIA (Oryza sativa subsp. japonica (Rice)).